The primary structure comprises 336 residues: Tetraacyldisaccharide 4'-kinase (336 aa).

60–67 (TVGGTGKT) is a binding site for ATP.

The protein belongs to the LpxK family.

The enzyme catalyses a lipid A disaccharide + ATP = a lipid IVA + ADP + H(+). The protein operates within glycolipid biosynthesis; lipid IV(A) biosynthesis; lipid IV(A) from (3R)-3-hydroxytetradecanoyl-[acyl-carrier-protein] and UDP-N-acetyl-alpha-D-glucosamine: step 6/6. Its function is as follows. Transfers the gamma-phosphate of ATP to the 4'-position of a tetraacyldisaccharide 1-phosphate intermediate (termed DS-1-P) to form tetraacyldisaccharide 1,4'-bis-phosphate (lipid IVA). This chain is Tetraacyldisaccharide 4'-kinase, found in Pseudomonas fluorescens (strain Pf0-1).